Reading from the N-terminus, the 147-residue chain is MALLQPARIRILAIGKLKRAWVAEGVAFYRKRLPGLEVVELKDSTPAKEAEAIRAARKPAERLVLLSEEGRQLSSVGLAELLGGWASERLALVIGGADGHDPTLKQQADVLLSLSELTFPHELARLMLVEQLYRASTILQGGPYHRS.

S-adenosyl-L-methionine contacts are provided by residues L66, G95, and 114 to 119 (LSELTF).

Belongs to the RNA methyltransferase RlmH family. Homodimer.

It is found in the cytoplasm. It catalyses the reaction pseudouridine(1915) in 23S rRNA + S-adenosyl-L-methionine = N(3)-methylpseudouridine(1915) in 23S rRNA + S-adenosyl-L-homocysteine + H(+). Its function is as follows. Specifically methylates the pseudouridine at position 1915 (m3Psi1915) in 23S rRNA. This is Ribosomal RNA large subunit methyltransferase H from Synechococcus sp. (strain RCC307).